Here is a 397-residue protein sequence, read N- to C-terminus: G2/mitotic-specific cyclin-B1 (397 aa).

Positions 1–17 are enriched in polar residues; it reads MALRVTRNTRLASSENQ. The interval 1–30 is disordered; that stretch reads MALRVTRNTRLASSENQGALPGKAAVANKP.

It belongs to the cyclin family. Cyclin AB subfamily. As to quaternary structure, interacts with the CDK1 protein kinase to form a serine/threonine kinase holoenzyme complex also known as maturation promoting factor (MPF). The cyclin subunit imparts substrate specificity to the complex.

In terms of biological role, essential for the control of the cell cycle at the G2/M (mitosis) transition. The polypeptide is G2/mitotic-specific cyclin-B1 (ccnb1) (Carassius auratus (Goldfish)).